The chain runs to 663 residues: NAD(P)H-quinone oxidoreductase subunit 5, chloroplastic (663 aa).

Helical transmembrane passes span 11–31, 41–61, 89–109, 126–146, 149–169, 189–209, 224–244, 260–280, 292–312, 329–349, 398–418, 436–456, 482–502, 528–548, 607–627, and 635–655; these read WLIP…LISF, LYGL…MNLL, FFID…AVLV, FFAY…SPNL, IYIF…FWFT, FCLL…DFIT, HLYF…AKSA, TPIS…FLVA, IMNL…TIAL, LGYM…FHLV, FTFL…CFWS, IAWI…LLAF, LYML…GFIS, ILLN…AYSI, WLFD…GQSL, and VSSY…FLPL.

Belongs to the complex I subunit 5 family. As to quaternary structure, NDH is composed of at least 16 different subunits, 5 of which are encoded in the nucleus.

Its subcellular location is the plastid. The protein localises to the chloroplast thylakoid membrane. The catalysed reaction is a plastoquinone + NADH + (n+1) H(+)(in) = a plastoquinol + NAD(+) + n H(+)(out). It carries out the reaction a plastoquinone + NADPH + (n+1) H(+)(in) = a plastoquinol + NADP(+) + n H(+)(out). In terms of biological role, NDH shuttles electrons from NAD(P)H:plastoquinone, via FMN and iron-sulfur (Fe-S) centers, to quinones in the photosynthetic chain and possibly in a chloroplast respiratory chain. The immediate electron acceptor for the enzyme in this species is believed to be plastoquinone. Couples the redox reaction to proton translocation, and thus conserves the redox energy in a proton gradient. This Chara vulgaris (Common stonewort) protein is NAD(P)H-quinone oxidoreductase subunit 5, chloroplastic (ndhF).